The chain runs to 236 residues: 5'-methylthioadenosine/S-adenosylhomocysteine nucleosidase (236 aa).

Glu12 functions as the Proton acceptor in the catalytic mechanism. Substrate-binding positions include Gly78, Met153, and 174 to 175 (ME). Asp198 functions as the Proton donor in the catalytic mechanism.

The protein belongs to the PNP/UDP phosphorylase family. MtnN subfamily.

It carries out the reaction S-adenosyl-L-homocysteine + H2O = S-(5-deoxy-D-ribos-5-yl)-L-homocysteine + adenine. The catalysed reaction is S-methyl-5'-thioadenosine + H2O = 5-(methylsulfanyl)-D-ribose + adenine. It catalyses the reaction 5'-deoxyadenosine + H2O = 5-deoxy-D-ribose + adenine. It functions in the pathway amino-acid biosynthesis; L-methionine biosynthesis via salvage pathway; S-methyl-5-thio-alpha-D-ribose 1-phosphate from S-methyl-5'-thioadenosine (hydrolase route): step 1/2. In terms of biological role, catalyzes the irreversible cleavage of the glycosidic bond in both 5'-methylthioadenosine (MTA) and S-adenosylhomocysteine (SAH/AdoHcy) to adenine and the corresponding thioribose, 5'-methylthioribose and S-ribosylhomocysteine, respectively. Also cleaves 5'-deoxyadenosine, a toxic by-product of radical S-adenosylmethionine (SAM) enzymes, into 5-deoxyribose and adenine. The sequence is that of 5'-methylthioadenosine/S-adenosylhomocysteine nucleosidase from Geobacillus thermodenitrificans (strain NG80-2).